A 116-amino-acid polypeptide reads, in one-letter code: Iron-sulfur cluster insertion protein ErpA (116 aa).

Iron-sulfur cluster-binding residues include Cys-44, Cys-108, and Cys-110.

Belongs to the HesB/IscA family. In terms of assembly, homodimer. Requires iron-sulfur cluster as cofactor.

Required for insertion of 4Fe-4S clusters for at least IspG. The sequence is that of Iron-sulfur cluster insertion protein ErpA from Shewanella denitrificans (strain OS217 / ATCC BAA-1090 / DSM 15013).